The primary structure comprises 629 residues: Nicotinic receptor-associated protein 1 (629 aa).

2 C2 domains span residues Met1–Leu144 and Arg162–Leu299. 10 residues coordinate Ca(2+): Asp33, Asp39, Asp108, Asp110, Asp122, Asp192, Asp198, Asp254, Asp256, and Asp274. Residues Glu342–Leu561 enclose the VWFA domain. Disordered stretches follow at residues Gly581–Tyr600 and Ile607–Tyr629.

This sequence belongs to the copine family. In terms of assembly, interacts with nicotinic acetylcholine receptor. It depends on Ca(2+) as a cofactor.

The protein resides in the cell membrane. Exhibits calcium-dependent phospholipid binding properties. May function in membrane trafficking. Regulates synaptic levels of nicotinic acetylcholine receptor subunit lev-1 and unc-38 in the nerve cord. Involved in nicotinic acetylcholine receptor (nAChR)-mediated sensitivity to nicotine and levamisole. Affects directional sperm motility. The sequence is that of Nicotinic receptor-associated protein 1 from Caenorhabditis briggsae.